Consider the following 452-residue polypeptide: Probable ECA polymerase (452 aa).

11 consecutive transmembrane segments (helical) span residues 6–26 (FSGL…LTWF), 37–57 (VFFS…TSVL), 63–83 (VGVA…CFYG), 118–138 (VILM…NGFL), 155–175 (GVAL…VYFL), 181–201 (AWLF…MIVG), 207–227 (IIIA…ISLW), 228–248 (MLVA…LKRY), 341–361 (LVVM…GLII), 378–398 (YKAA…IVLA), and 410–430 (VFFL…FWLF).

It belongs to the WzyE family. In terms of assembly, probably part of a complex composed of WzxE, WzyE and WzzE.

It localises to the cell inner membrane. Its pathway is bacterial outer membrane biogenesis; enterobacterial common antigen biosynthesis. Functionally, probably involved in the polymerization of enterobacterial common antigen (ECA) trisaccharide repeat units. This is Probable ECA polymerase from Salmonella agona (strain SL483).